We begin with the raw amino-acid sequence, 184 residues long: Peptide deformylase (184 aa).

Cys-111 and His-154 together coordinate Fe cation. Residue Glu-155 is part of the active site. His-158 contributes to the Fe cation binding site.

This sequence belongs to the polypeptide deformylase family. Fe(2+) serves as cofactor.

It catalyses the reaction N-terminal N-formyl-L-methionyl-[peptide] + H2O = N-terminal L-methionyl-[peptide] + formate. Its function is as follows. Removes the formyl group from the N-terminal Met of newly synthesized proteins. Requires at least a dipeptide for an efficient rate of reaction. N-terminal L-methionine is a prerequisite for activity but the enzyme has broad specificity at other positions. This chain is Peptide deformylase, found in Lactobacillus gasseri (strain ATCC 33323 / DSM 20243 / BCRC 14619 / CIP 102991 / JCM 1131 / KCTC 3163 / NCIMB 11718 / NCTC 13722 / AM63).